A 205-amino-acid chain; its full sequence is MEINYELYLITDRRFLKGRQLKKVVEDAILGGVTIVQVREKDVSTREFYNVAKEVKEVTDYYKVPIIINDRLDIAQAIDASGVHLGQKDMHLNIAREILGKDKIIGISVGNVKEALEAQNNGADYLGIGTIFPTGSKKDVDAIIGIDGLSKIKDSISIPSVAIGGINKTNFKDVLKTGIEGISVISAILDEDDIKLAANNLLINK.

Residues 37–41 (QVREK) and N69 contribute to the 4-amino-2-methyl-5-(diphosphooxymethyl)pyrimidine site. 2 residues coordinate Mg(2+): D70 and D89. S108 contributes to the 4-amino-2-methyl-5-(diphosphooxymethyl)pyrimidine binding site. Position 134–136 (134–136 (TGS)) interacts with 2-[(2R,5Z)-2-carboxy-4-methylthiazol-5(2H)-ylidene]ethyl phosphate. K137 contacts 4-amino-2-methyl-5-(diphosphooxymethyl)pyrimidine. Residues G165 and 185 to 186 (IS) each bind 2-[(2R,5Z)-2-carboxy-4-methylthiazol-5(2H)-ylidene]ethyl phosphate.

The protein belongs to the thiamine-phosphate synthase family. Mg(2+) serves as cofactor.

It catalyses the reaction 2-[(2R,5Z)-2-carboxy-4-methylthiazol-5(2H)-ylidene]ethyl phosphate + 4-amino-2-methyl-5-(diphosphooxymethyl)pyrimidine + 2 H(+) = thiamine phosphate + CO2 + diphosphate. The enzyme catalyses 2-(2-carboxy-4-methylthiazol-5-yl)ethyl phosphate + 4-amino-2-methyl-5-(diphosphooxymethyl)pyrimidine + 2 H(+) = thiamine phosphate + CO2 + diphosphate. The catalysed reaction is 4-methyl-5-(2-phosphooxyethyl)-thiazole + 4-amino-2-methyl-5-(diphosphooxymethyl)pyrimidine + H(+) = thiamine phosphate + diphosphate. It functions in the pathway cofactor biosynthesis; thiamine diphosphate biosynthesis; thiamine phosphate from 4-amino-2-methyl-5-diphosphomethylpyrimidine and 4-methyl-5-(2-phosphoethyl)-thiazole: step 1/1. Condenses 4-methyl-5-(beta-hydroxyethyl)thiazole monophosphate (THZ-P) and 2-methyl-4-amino-5-hydroxymethyl pyrimidine pyrophosphate (HMP-PP) to form thiamine monophosphate (TMP). This Clostridium botulinum (strain Langeland / NCTC 10281 / Type F) protein is Thiamine-phosphate synthase.